The following is a 386-amino-acid chain: O-methyltransferase aunE (386 aa).

Residue tryptophan 200 participates in S-adenosyl-L-methionine binding. Catalysis depends on histidine 299, which acts as the Proton acceptor.

Belongs to the class I-like SAM-binding methyltransferase superfamily. Cation-independent O-methyltransferase family.

Its pathway is secondary metabolite biosynthesis. Its function is as follows. O-methyltransferase; part of the gene cluster that mediates the biosynthesis of aurasperone B, a dimeric gamma-naphthopyrone. The first step in the biosynthesis of aurasperone B is the production of gamma-naphthopyrone precursor YWA1 by the non-reducing polyketide synthase albA, via condensation of one acetyl-CoA starter unit with 6 malonyl-CoA units. YWA1 is then methylated by aunE at position C-6 to yield foncesin which is further methylated at position C-8 by aunD to produce fonsecin B. A key enzyme in the biosynthetic pathway is the cytochrome P450 monooxygenase aunB which catalyzes the oxidative dimerization of fonsecin B to aurasperone B. AunB also catalyzes the oxidative dimerization of rubrofusarin B into aurasperone A. The polypeptide is O-methyltransferase aunE (Aspergillus niger (strain ATCC MYA-4892 / CBS 513.88 / FGSC A1513)).